The following is a 312-amino-acid chain: Gamma-soluble NSF attachment protein (312 aa).

Residues 281-312 form a disordered region; the sequence is KKKSPATPQAKPDGVTATAADEEEDEYSGGLC. At Ser-284 the chain carries Phosphoserine. Residue Thr-287 is modified to Phosphothreonine. Residues 300–312 show a composition bias toward acidic residues; sequence ADEEEDEYSGGLC. Ser-308 is subject to Phosphoserine.

This sequence belongs to the SNAP family. As to quaternary structure, interacts with RAB11FIP5. Interacts with VTI1A.

It is found in the membrane. The protein localises to the golgi apparatus. In terms of biological role, required for vesicular transport between the endoplasmic reticulum and the Golgi apparatus. The chain is Gamma-soluble NSF attachment protein from Homo sapiens (Human).